The sequence spans 278 residues: Cytidine kinase (278 aa).

203-208 (TRGEKG) contacts ATP. Residue D237 is the Proton acceptor of the active site.

The protein belongs to the carbohydrate kinase PfkB family. Mg(2+) serves as cofactor.

It carries out the reaction cytidine + ATP = CMP + ADP + H(+). Its function is as follows. Involved in nucleoside degradation. Phosphorylates cytidine to CMP. Can also act on deoxycytidine and uridine, but is most active with cytidine. ATP is the most preferred phosphate donor, but it can also use GTP, CTP or UTP. In Thermococcus kodakarensis (strain ATCC BAA-918 / JCM 12380 / KOD1) (Pyrococcus kodakaraensis (strain KOD1)), this protein is Cytidine kinase.